Consider the following 1254-residue polypeptide: NPC intracellular cholesterol transporter 1 homolog 1b (1254 aa).

A signal peptide spans 1–16 (MKVIFATIWLIAGAWS). Residues 17–272 (QSAEQLGCIW…WKIAGLYGVT (256 aa)) are Extracellular-facing. 8 cysteine pairs are disulfide-bonded: C24–C81, C62–C116, C82–C120, C104–C241, C107–C161, C178–C186, C231–C246, and C243–C250. 2 N-linked (GlcNAc...) asparagine glycosylation sites follow: N123 and N132. A helical membrane pass occupies residues 273–293 (FILALIIACALSFFIFWGAFG). Topologically, residues 294–325 (KTSAPSVCMPTLFGEFFYHGFRIWGTFCAKHP) are cytoplasmic. A helical transmembrane segment spans residues 326–346 (VIVLALCSWAIAGLSFGIRYM). The Extracellular portion of the chain corresponds to 347–593 (TITTDPVELW…AIVELSEGEV (247 aa)). N-linked (GlcNAc...) asparagine glycosylation is present at N389. A disulfide bond links C438 and C454. N479 carries N-linked (GlcNAc...) asparagine glycosylation. A disulfide bond links C491 and C500. Residues 592–757 (EVSTVVISYV…ITAFVALMAI (166 aa)) enclose the SSD domain. Residues 594-614 (STVVISYVVMFVYVAIALGHI) form a helical membrane-spanning segment. The Cytoplasmic segment spans residues 615-625 (RSCRGFLRESR). The chain crosses the membrane as a helical span at residues 626–646 (IMLAIGGIVIVLASVVCSLGF). Residues 647-657 (WGYLDVTTTML) are Extracellular-facing. Residues 658-678 (AIEVIPFLVLAVGVDNIFIMV) form a helical membrane-spanning segment. The Cytoplasmic portion of the chain corresponds to 679-736 (HTYQRLDHSKFKTTHEAIGEAIGQVGPSILQTAGSEMACFAIGCISDMPAVKTFAMYA). A helical transmembrane segment spans residues 737–757 (AIAILLDFLLQITAFVALMAI). Topologically, residues 758–815 (DEKRYLDGRLDMLCCVKSGGKKINDEDGDGVDRPKEVGLLETLFKNFYSPFLLSKPVK) are extracellular. Residues 816–836 (VSVLLIFTVITCLSLMVTPSI) form a helical membrane-spanning segment. At 837-857 (EKGLDQEMSMPKNSHVVKYFR) the chain is on the cytoplasmic side. A helical transmembrane segment spans residues 858 to 878 (YMVDLLAMGAPVYWVLKPGLN). At 879-1079 (YSEPLQQNLI…EQYLTIWGDA (201 aa)) the chain is on the extracellular side. Residues C889 and C894 are joined by a disulfide bond. N-linked (GlcNAc...) asparagine glycosylation is found at N896 and N939. Disulfide bonds link C935-C990, C936-C958, and C946-C955. Residues 1080-1100 (MFSLGMSLVAIFLVTLLITGL) traverse the membrane as a helical segment. Residues 1101 to 1105 (DITST) are Cytoplasmic-facing. The chain crosses the membrane as a helical span at residues 1106 to 1126 (FIVLFMVICILINMLGMMWAW). Residues 1127 to 1132 (SINLNA) are Extracellular-facing. A helical transmembrane segment spans residues 1133-1153 (ISLVNLVVCVGIGVEFVAHIV). At 1154–1174 (RSFKRAEGTAQERARHSLNVT) the chain is on the cytoplasmic side. A helical membrane pass occupies residues 1175–1195 (GSSVLSGITLTKFAGIVVLGF). Residues 1196 to 1207 (SNSQIFQVFYFR) are Extracellular-facing. Residues 1208 to 1228 (MYLGIVLIGAAHGLILLPVLL) form a helical membrane-spanning segment. Residues 1229 to 1254 (SLLGPPQKLARSSGAEPTASITITTN) are Cytoplasmic-facing.

The protein belongs to the patched family. Expressed in the midgut.

Its subcellular location is the cell membrane. It catalyses the reaction cholesterol(in) = cholesterol(out). Important for cholesterol absorption at the midgut epithelium. Acts only in the early steps of sterol absorption, prior to Npc1a-dependent intracellular sterol trafficking. The polypeptide is NPC intracellular cholesterol transporter 1 homolog 1b (Drosophila melanogaster (Fruit fly)).